The primary structure comprises 441 residues: C-terminal-binding protein 1 (441 aa).

The segment at Met-1–Ala-70 is interaction with GLIS2 1. NAD(+)-binding positions include Ser-100, Ile-180–Val-185, Asp-204, Cys-237–Asn-243, Thr-264–Arg-266, and Asp-290. Arg-266 is a catalytic residue. The interaction with GLIS2 2 stretch occupies residues Ala-288–Thr-360. Glu-295 is an active-site residue. Ser-300 carries the phosphoserine modification. His-315 acts as the Proton donor in catalysis. His-315–Trp-318 contributes to the NAD(+) binding site. The tract at residues Ser-409 to Leu-441 is disordered. Ser-423 carries the post-translational modification Phosphoserine. Residue Lys-429 forms a Glycyl lysine isopeptide (Lys-Gly) (interchain with G-Cter in SUMO) linkage. The span at Pro-430–Leu-441 shows a compositional bias: basic and acidic residues.

Belongs to the D-isomer specific 2-hydroxyacid dehydrogenase family. As to quaternary structure, homo- or heterodimer. Heterodimer with CTBP2. Interacts with ELK3 (via its PXDLS motif). Interacts with RBBP8 (via its PXDLS motif). Interacts with PNN, MECOM and ZFHX1B. Interacts with ZNF366 (via PXDLS motif). Interaction with SATB1 (non-acetylated form); the interaction stabilizes its attachment to DNA and promotes transcription repression. Interacts with PRDM16; the interaction represses white adipose tissue (WAT)-specific genes expression. Interacts with GLIS2, HIPK2, FOXP1, FOXP2, HDAC4, HDAC5, HDAC9, NRIP1, WIZ and ZNF217. Interacts with BCL6; the interaction is required for BCL6 transcriptional autoinhibition and inhibition of some BCL6 target genes. Interacts with IKZF4. Interacts with MCRIP1 (unphosphorylated form, via the PXDLS motif); competitively inhibiting CTBP-ZEB1 interaction. Interacts with Bassoon/BSN; this interaction targets and anchors CTBP1 to presynapses. Interacts with SIMC1. The cofactor is NAD(+). Post-translationally, ADP-ribosylated; when cells are exposed to brefeldin A. The level of phosphorylation appears to be regulated during the cell cycle. Phosphorylation by HIPK2 on Ser-423 induces proteasomal degradation. In terms of processing, sumoylation on Lys-429 is promoted by the E3 SUMO-protein ligase CBX4. Expressed in a wide range of adult tissues.

Its subcellular location is the cytoplasm. The protein localises to the nucleus. In terms of biological role, corepressor targeting diverse transcription regulators such as GLIS2 or BCL6. Has dehydrogenase activity. Involved in controlling the equilibrium between tubular and stacked structures in the Golgi complex. Functions in brown adipose tissue (BAT) differentiation. This is C-terminal-binding protein 1 (Ctbp1) from Mus musculus (Mouse).